The sequence spans 283 residues: GTPase Era (283 aa).

The region spanning tyrosine 7–glutamate 175 is the Era-type G domain. The segment at glycine 15–serine 22 is G1. Glycine 15–serine 22 contacts GTP. Residues asparagine 41–serine 45 form a G2 region. A G3 region spans residues aspartate 62–glycine 65. GTP is bound by residues aspartate 62–valine 66 and asparagine 124–aspartate 127. The tract at residues asparagine 124–aspartate 127 is G4. The tract at residues isoleucine 154–alanine 156 is G5. A KH type-2 domain is found at isoleucine 198 to asparagine 283.

It belongs to the TRAFAC class TrmE-Era-EngA-EngB-Septin-like GTPase superfamily. Era GTPase family. In terms of assembly, monomer.

The protein resides in the cytoplasm. It is found in the cell membrane. In terms of biological role, an essential GTPase that binds both GDP and GTP, with rapid nucleotide exchange. Plays a role in 16S rRNA processing and 30S ribosomal subunit biogenesis and possibly also in cell cycle regulation and energy metabolism. The sequence is that of GTPase Era from Buchnera aphidicola subsp. Acyrthosiphon pisum (strain Tuc7).